The following is a 378-amino-acid chain: Probable pectin lyase A (378 aa).

Positions 1 to 18 are cleaved as a signal peptide; it reads MKYQDLLAIAGCIANAGA. 2 disulfides stabilise this stretch: cysteine 81–cysteine 100 and cysteine 90–cysteine 224. Residue asparagine 127 is glycosylated (N-linked (GlcNAc...) asparagine). Arginine 254 is an active-site residue. Cysteine 321 and cysteine 329 are joined by a disulfide.

This sequence belongs to the polysaccharide lyase 1 family.

The protein resides in the secreted. The catalysed reaction is Eliminative cleavage of (1-&gt;4)-alpha-D-galacturonan methyl ester to give oligosaccharides with 4-deoxy-6-O-methyl-alpha-D-galact-4-enuronosyl groups at their non-reducing ends.. Its function is as follows. Pectinolytic enzymes consist of four classes of enzymes: pectin lyase, polygalacturonase, pectin methylesterase and rhamnogalacturonase. Among pectinolytic enzymes, pectin lyase is the most important in depolymerization of pectin, since it cleaves internal glycosidic bonds of highly methylated pectins. The sequence is that of Probable pectin lyase A (pelA) from Aspergillus fumigatus (strain CBS 144.89 / FGSC A1163 / CEA10) (Neosartorya fumigata).